Here is a 364-residue protein sequence, read N- to C-terminus: Protein MGF 360-1L (364 aa).

It belongs to the asfivirus MGF 360 family.

Its function is as follows. Plays a role in virus cell tropism, and may be required for efficient virus replication in macrophages. In Ornithodoros (relapsing fever ticks), this protein is Protein MGF 360-1L.